The sequence spans 107 residues: UPF0045 protein in glkA 3'region (107 aa).

This sequence belongs to the UPF0045 family.

The protein is UPF0045 protein in glkA 3'region (dglA) of Staphylococcus xylosus.